A 239-amino-acid polypeptide reads, in one-letter code: Small ribosomal subunit protein uS2 (239 aa).

Belongs to the universal ribosomal protein uS2 family.

The polypeptide is Small ribosomal subunit protein uS2 (Prochlorococcus marinus (strain MIT 9313)).